Here is a 383-residue protein sequence, read N- to C-terminus: Serine protease 23 (383 aa).

Residues 1–19 (MAGIPGLLFLLFLLLCAVG) form the signal peptide. Asparagine 93 is a glycosylation site (N-linked (GlcNAc...) asparagine). The disordered stretch occupies residues 108–127 (SSGGGAQHRDSGSSGKSRRK). Serine 109 is subject to Phosphoserine; by FAM20C. An intrachain disulfide couples cysteine 160 to cysteine 176. Catalysis depends on histidine 175, which acts as the Charge relay system. Residue asparagine 207 is glycosylated (N-linked (GlcNAc...) asparagine). Residues aspartate 240 and serine 316 each act as charge relay system in the active site.

It belongs to the peptidase S1 family.

It localises to the secreted. The sequence is that of Serine protease 23 (PRSS23) from Macaca mulatta (Rhesus macaque).